Consider the following 245-residue polypeptide: Polyhedrin (245 aa).

Belongs to the polyhedrin family.

Major component of the virus occlusion bodies, which are large proteinaceous structures (polyhedra), that protect the virus from the outside environment for extended periods until they are ingested by insect larvae. In Lepidoptera (butterflies and moths), this protein is Polyhedrin (PH).